We begin with the raw amino-acid sequence, 432 residues long: Chaperone SurA (432 aa).

The signal sequence occupies residues 1-26 (MKKIASFCSAAVLIASSFLLNNTVQA). PpiC domains follow at residues 176 to 277 (QTEY…KVQD) and 286 to 386 (VQEV…EVTG).

The protein localises to the periplasm. It carries out the reaction [protein]-peptidylproline (omega=180) = [protein]-peptidylproline (omega=0). Its function is as follows. Chaperone involved in the correct folding and assembly of outer membrane proteins. Recognizes specific patterns of aromatic residues and the orientation of their side chains, which are found more frequently in integral outer membrane proteins. May act in both early periplasmic and late outer membrane-associated steps of protein maturation. The chain is Chaperone SurA from Idiomarina loihiensis (strain ATCC BAA-735 / DSM 15497 / L2-TR).